We begin with the raw amino-acid sequence, 164 residues long: UPF0178 protein BRADO3147 (164 aa).

It belongs to the UPF0178 family.

The polypeptide is UPF0178 protein BRADO3147 (Bradyrhizobium sp. (strain ORS 278)).